The primary structure comprises 447 residues: Exodeoxyribonuclease 7 large subunit (447 aa).

It belongs to the XseA family. As to quaternary structure, heterooligomer composed of large and small subunits.

It localises to the cytoplasm. It carries out the reaction Exonucleolytic cleavage in either 5'- to 3'- or 3'- to 5'-direction to yield nucleoside 5'-phosphates.. Bidirectionally degrades single-stranded DNA into large acid-insoluble oligonucleotides, which are then degraded further into small acid-soluble oligonucleotides. This Geobacter sulfurreducens (strain ATCC 51573 / DSM 12127 / PCA) protein is Exodeoxyribonuclease 7 large subunit.